Here is a 495-residue protein sequence, read N- to C-terminus: UDP-N-acetylmuramoyl-L-alanyl-D-glutamate--2,6-diaminopimelate ligase (495 aa).

Residues Leu28, Ser30, and 45 to 47 (HRV) contribute to the UDP-N-acetyl-alpha-D-muramoyl-L-alanyl-D-glutamate site. 117-123 (GTNGKTT) contributes to the ATP binding site. Residues Asn158, 159–160 (TT), Ser186, Gln192, and Arg194 contribute to the UDP-N-acetyl-alpha-D-muramoyl-L-alanyl-D-glutamate site. N6-carboxylysine is present on Lys226. Meso-2,6-diaminopimelate is bound by residues Arg394, 418–421 (DNPR), Gly469, and Glu473. Residues 418 to 421 (DNPR) carry the Meso-diaminopimelate recognition motif motif.

This sequence belongs to the MurCDEF family. MurE subfamily. The cofactor is Mg(2+). Post-translationally, carboxylation is probably crucial for Mg(2+) binding and, consequently, for the gamma-phosphate positioning of ATP.

Its subcellular location is the cytoplasm. It carries out the reaction UDP-N-acetyl-alpha-D-muramoyl-L-alanyl-D-glutamate + meso-2,6-diaminopimelate + ATP = UDP-N-acetyl-alpha-D-muramoyl-L-alanyl-gamma-D-glutamyl-meso-2,6-diaminopimelate + ADP + phosphate + H(+). It functions in the pathway cell wall biogenesis; peptidoglycan biosynthesis. Catalyzes the addition of meso-diaminopimelic acid to the nucleotide precursor UDP-N-acetylmuramoyl-L-alanyl-D-glutamate (UMAG) in the biosynthesis of bacterial cell-wall peptidoglycan. This Histophilus somni (strain 129Pt) (Haemophilus somnus) protein is UDP-N-acetylmuramoyl-L-alanyl-D-glutamate--2,6-diaminopimelate ligase.